The chain runs to 551 residues: Probable terpene synthase 8 (551 aa).

Mg(2+) is bound by residues D307, D311, and E457. The DDXXD motif signature appears at 307–311 (DDTYD).

Belongs to the terpene synthase family. It depends on Mg(2+) as a cofactor.

In terms of biological role, probable sesquiterpene synthase. The chain is Probable terpene synthase 8 (TPS8) from Ricinus communis (Castor bean).